Consider the following 285-residue polypeptide: Nucleotide-binding protein Cphy_0331 (285 aa).

ATP is bound at residue 8-15; it reads GMSGAGKS. 59-62 serves as a coordination point for GTP; the sequence is DIRS.

It belongs to the RapZ-like family.

In terms of biological role, displays ATPase and GTPase activities. The chain is Nucleotide-binding protein Cphy_0331 from Lachnoclostridium phytofermentans (strain ATCC 700394 / DSM 18823 / ISDg) (Clostridium phytofermentans).